The primary structure comprises 180 residues: Alkyl hydroperoxide reductase AhpD (180 aa).

Cys-131 serves as the catalytic Proton donor. Cys-131 and Cys-134 are joined by a disulfide. The active-site Cysteine sulfenic acid (-SOH) intermediate is the Cys-134.

The protein belongs to the AhpD family.

The enzyme catalyses N(6)-[(R)-dihydrolipoyl]-L-lysyl-[lipoyl-carrier protein] + a hydroperoxide = N(6)-[(R)-lipoyl]-L-lysyl-[lipoyl-carrier protein] + an alcohol + H2O. In terms of biological role, antioxidant protein with alkyl hydroperoxidase activity. Required for the reduction of the AhpC active site cysteine residues and for the regeneration of the AhpC enzyme activity. This chain is Alkyl hydroperoxide reductase AhpD, found in Beijerinckia indica subsp. indica (strain ATCC 9039 / DSM 1715 / NCIMB 8712).